The sequence spans 293 residues: Pantothenate synthetase (293 aa).

30-37 (MGYLHKGH) is a binding site for ATP. Residue His37 is the Proton donor of the active site. A (R)-pantoate-binding site is contributed by Gln61. Beta-alanine is bound at residue Gln61. An ATP-binding site is contributed by 147–150 (GEKD). Gln153 provides a ligand contact to (R)-pantoate. ATP contacts are provided by residues Val176 and 184-187 (CSSR).

It belongs to the pantothenate synthetase family. In terms of assembly, homodimer.

Its subcellular location is the cytoplasm. The enzyme catalyses (R)-pantoate + beta-alanine + ATP = (R)-pantothenate + AMP + diphosphate + H(+). It participates in cofactor biosynthesis; (R)-pantothenate biosynthesis; (R)-pantothenate from (R)-pantoate and beta-alanine: step 1/1. In terms of biological role, catalyzes the condensation of pantoate with beta-alanine in an ATP-dependent reaction via a pantoyl-adenylate intermediate. This is Pantothenate synthetase from Brucella melitensis biotype 2 (strain ATCC 23457).